The sequence spans 446 residues: tRNA wybutosine-synthesizing protein 2 homolog (446 aa).

Residues S208, K215, E255, and 283–284 each bind S-adenosyl-L-methionine; that span reads DN.

This sequence belongs to the class I-like SAM-binding methyltransferase superfamily. TRM5/TYW2 family.

The enzyme catalyses 4-demethylwyosine(37) in tRNA(Phe) + S-adenosyl-L-methionine = 4-demethyl-7-[(3S)-3-amino-3-carboxypropyl]wyosine(37) in tRNA(Phe) + S-methyl-5'-thioadenosine + H(+). It functions in the pathway tRNA modification; wybutosine-tRNA(Phe) biosynthesis. Its function is as follows. S-adenosyl-L-methionine-dependent transferase that acts as a component of the wybutosine biosynthesis pathway. Wybutosine is a hyper modified guanosine with a tricyclic base found at the 3'-position adjacent to the anticodon of eukaryotic phenylalanine tRNA. Catalyzes the transfer of the alpha-amino-alpha-carboxypropyl (acp) group from S-adenosyl-L-methionine to the C-7 position of 4-demethylwyosine (imG-14) to produce wybutosine-86. In Mus musculus (Mouse), this protein is tRNA wybutosine-synthesizing protein 2 homolog (Trmt12).